Consider the following 268-residue polypeptide: Tetraspanin-5 (268 aa).

The Cytoplasmic segment spans residues 1–17 (MSGKHYKGPEVSCCIKY). A helical transmembrane segment spans residues 18–38 (FIFGFNVIFWFLGITFLGIGL). At 39 to 61 (WAWNEKGVLSNISSITDLGGFDP) the chain is on the extracellular side. Asn-49 carries N-linked (GlcNAc...) asparagine glycosylation. A helical transmembrane segment spans residues 62 to 82 (VWLFLVVGGVMFILGFAGCIG). The Cytoplasmic portion of the chain corresponds to 83–92 (ALRENTFLLK). The chain crosses the membrane as a helical span at residues 93-113 (FFSVFLGIIFFLELTAGVLAF). The Extracellular portion of the chain corresponds to 114 to 232 (VFKDWIKDQL…PQFEKWLQDN (119 aa)). Cystine bridges form between Cys-153-Cys-221, Cys-154-Cys-186, Cys-170-Cys-180, and Cys-187-Cys-200. Residues Asn-169 and Asn-174 are each glycosylated (N-linked (GlcNAc...) asparagine). Residue Asn-232 is glycosylated (N-linked (GlcNAc...) asparagine). The helical transmembrane segment at 233-253 (LTIVAGIFIGIALLQIFGICL) threads the bilayer. Residues 254 to 268 (AQNLVSDIEAVRASW) are Cytoplasmic-facing.

Belongs to the tetraspanin (TM4SF) family. In terms of assembly, interacts with ADAM10; the interaction influences ADAM10 substrate specificity, endocytosis and turnover. In terms of processing, palmitoylated.

The protein resides in the cell membrane. Functionally, part of TspanC8 subgroup, composed of 6 members that interact with the transmembrane metalloprotease ADAM10. This interaction is required for ADAM10 exit from the endoplasmic reticulum and for enzymatic maturation and trafficking to the cell surface as well as substrate specificity. Different TspanC8/ADAM10 complexes have distinct substrates. Promotes ADAM10-mediated cleavage of CD44. Seems to regulate VE-cadherin expression in endothelial cells probably through interaction with ADAM10, promoting leukocyte transmigration. This Homo sapiens (Human) protein is Tetraspanin-5.